Here is a 263-residue protein sequence, read N- to C-terminus: 4-hydroxy-2-oxo-heptane-1,7-dioate aldolase (263 aa).

The Proton acceptor role is filled by His-45. Gln-147 lines the substrate pocket. Residue Glu-149 coordinates a divalent metal cation. Positions 174 and 175 each coordinate substrate. Asp-175 contributes to the a divalent metal cation binding site.

The protein belongs to the HpcH/HpaI aldolase family. Homohexamer; trimer of dimers. It depends on a divalent metal cation as a cofactor.

It catalyses the reaction 4-hydroxy-2-oxoheptanedioate = succinate semialdehyde + pyruvate. It participates in aromatic compound metabolism; 4-hydroxyphenylacetate degradation; pyruvate and succinate semialdehyde from 4-hydroxyphenylacetate: step 7/7. Its function is as follows. Catalyzes the reversible retro-aldol cleavage of 4-hydroxy-2-ketoheptane-1,7-dioate (HKHD) to pyruvate and succinic semialdehyde. This chain is 4-hydroxy-2-oxo-heptane-1,7-dioate aldolase, found in Salmonella choleraesuis (strain SC-B67).